A 580-amino-acid chain; its full sequence is Amino-acid acetyltransferase, mitochondrial (580 aa).

The 158-residue stretch at 403-560 (LTMQNLFDDK…NPRHKNGVVN (158 aa)) folds into the N-acetyltransferase domain.

The protein belongs to the acetyltransferase family.

It is found in the mitochondrion. It carries out the reaction L-glutamate + acetyl-CoA = N-acetyl-L-glutamate + CoA + H(+). It functions in the pathway amino-acid biosynthesis; L-arginine biosynthesis; N(2)-acetyl-L-ornithine from L-glutamate: step 1/4. Its function is as follows. N-acetylglutamate synthase involved in arginine biosynthesis. The polypeptide is Amino-acid acetyltransferase, mitochondrial (ARG2) (Candida dubliniensis (strain CD36 / ATCC MYA-646 / CBS 7987 / NCPF 3949 / NRRL Y-17841) (Yeast)).